The following is a 211-amino-acid chain: Thiamine-phosphate synthase (211 aa).

4-amino-2-methyl-5-(diphosphooxymethyl)pyrimidine contacts are provided by residues 37–41 and asparagine 69; that span reads QLRIK. Positions 70 and 89 each coordinate Mg(2+). Residue serine 108 coordinates 4-amino-2-methyl-5-(diphosphooxymethyl)pyrimidine. 2-[(2R,5Z)-2-carboxy-4-methylthiazol-5(2H)-ylidene]ethyl phosphate is bound at residue 134–136; that stretch reads TQT. Lysine 137 is a 4-amino-2-methyl-5-(diphosphooxymethyl)pyrimidine binding site. Residues glycine 166 and 186 to 187 each bind 2-[(2R,5Z)-2-carboxy-4-methylthiazol-5(2H)-ylidene]ethyl phosphate; that span reads VS.

It belongs to the thiamine-phosphate synthase family. Mg(2+) is required as a cofactor.

It carries out the reaction 2-[(2R,5Z)-2-carboxy-4-methylthiazol-5(2H)-ylidene]ethyl phosphate + 4-amino-2-methyl-5-(diphosphooxymethyl)pyrimidine + 2 H(+) = thiamine phosphate + CO2 + diphosphate. The enzyme catalyses 2-(2-carboxy-4-methylthiazol-5-yl)ethyl phosphate + 4-amino-2-methyl-5-(diphosphooxymethyl)pyrimidine + 2 H(+) = thiamine phosphate + CO2 + diphosphate. It catalyses the reaction 4-methyl-5-(2-phosphooxyethyl)-thiazole + 4-amino-2-methyl-5-(diphosphooxymethyl)pyrimidine + H(+) = thiamine phosphate + diphosphate. It participates in cofactor biosynthesis; thiamine diphosphate biosynthesis; thiamine phosphate from 4-amino-2-methyl-5-diphosphomethylpyrimidine and 4-methyl-5-(2-phosphoethyl)-thiazole: step 1/1. Its function is as follows. Condenses 4-methyl-5-(beta-hydroxyethyl)thiazole monophosphate (THZ-P) and 2-methyl-4-amino-5-hydroxymethyl pyrimidine pyrophosphate (HMP-PP) to form thiamine monophosphate (TMP). In Salmonella newport (strain SL254), this protein is Thiamine-phosphate synthase.